The chain runs to 411 residues: Argininosuccinate lyase (411 aa).

The protein belongs to the lyase 1 family. Argininosuccinate lyase subfamily.

The protein resides in the cytoplasm. It carries out the reaction 2-(N(omega)-L-arginino)succinate = fumarate + L-arginine. It functions in the pathway amino-acid biosynthesis; L-arginine biosynthesis; L-arginine from L-ornithine and carbamoyl phosphate: step 3/3. The sequence is that of Argininosuccinate lyase from Legionella pneumophila (strain Paris).